A 199-amino-acid chain; its full sequence is Transcriptional regulatory protein DesR (199 aa).

The Response regulatory domain occupies 3–117; that stretch reads SIFIAEDQQM…ELANAIRSVM (115 aa). At Asp-54 the chain carries 4-aspartylphosphate. Positions 131–196 constitute an HTH luxR-type domain; sequence LYSEANPLTD…EAITRSKEKG (66 aa). Positions 155–174 form a DNA-binding region, H-T-H motif; the sequence is TKEIAQELSIKSGTVRNYIS.

In terms of processing, phosphorylated by DesK.

Its subcellular location is the cytoplasm. Member of the two-component regulatory system DesR/DesK, responsible for cold induction of the des gene coding for the Delta5 acyl-lipid desaturase. This is Transcriptional regulatory protein DesR (desR) from Bacillus subtilis (strain 168).